The sequence spans 680 residues: DNA-directed RNA polymerase subunit beta' (680 aa).

Positions 69, 71, 87, and 90 each coordinate Zn(2+). The Mg(2+) site is built by Asp-489, Asp-491, and Asp-493.

It belongs to the RNA polymerase beta' chain family. RpoC1 subfamily. In terms of assembly, in plastids the minimal PEP RNA polymerase catalytic core is composed of four subunits: alpha, beta, beta', and beta''. When a (nuclear-encoded) sigma factor is associated with the core the holoenzyme is formed, which can initiate transcription. Mg(2+) serves as cofactor. It depends on Zn(2+) as a cofactor.

The protein localises to the plastid. The protein resides in the chloroplast. The enzyme catalyses RNA(n) + a ribonucleoside 5'-triphosphate = RNA(n+1) + diphosphate. In terms of biological role, DNA-dependent RNA polymerase catalyzes the transcription of DNA into RNA using the four ribonucleoside triphosphates as substrates. The chain is DNA-directed RNA polymerase subunit beta' from Aethionema grandiflorum (Persian stone-cress).